A 512-amino-acid polypeptide reads, in one-letter code: 3-ketoacyl-CoA synthase 9 (512 aa).

Helical transmembrane passes span 44–64 (LITH…VTEI) and 83–103 (LVAF…YIMS). The 290-residue stretch at 100–389 (YIMSRPRSVY…FFMTLVTKKL (290 aa)) folds into the FAE domain. Active-site residues include cysteine 244, histidine 323, histidine 407, histidine 411, histidine 440, and asparagine 444.

Belongs to the thiolase-like superfamily. Chalcone/stilbene synthases family. Expressed in seedlings, stems, leaves, flowers and siliques. Expressed in roots, leaves, and stems, including epidermis, silique walls, sepals, the upper portion of the styles, and seed coats, but not in developing embryos.

The protein resides in the endoplasmic reticulum membrane. The enzyme catalyses a very-long-chain acyl-CoA + malonyl-CoA + H(+) = a very-long-chain 3-oxoacyl-CoA + CO2 + CoA. It participates in lipid metabolism; fatty acid biosynthesis. Its function is as follows. Involved in the elongation of C22 to C24 fatty acids, which are precursors for the biosynthesis of cuticular waxes, aliphatic suberins, and membrane lipids, including sphingolipids and phospholipids. This is 3-ketoacyl-CoA synthase 9 from Arabidopsis thaliana (Mouse-ear cress).